The chain runs to 184 residues: uncharacterized protein (184 aa).

A helical transmembrane segment spans residues 35 to 55 (LSFLIYILYTFSISGLSTFVI).

Its subcellular location is the membrane. This is an uncharacterized protein from Schizosaccharomyces pombe (strain 972 / ATCC 24843) (Fission yeast).